The sequence spans 177 residues: ATP synthase subunit delta (177 aa).

The protein belongs to the ATPase delta chain family. As to quaternary structure, F-type ATPases have 2 components, F(1) - the catalytic core - and F(0) - the membrane proton channel. F(1) has five subunits: alpha(3), beta(3), gamma(1), delta(1), epsilon(1). F(0) has three main subunits: a(1), b(2) and c(10-14). The alpha and beta chains form an alternating ring which encloses part of the gamma chain. F(1) is attached to F(0) by a central stalk formed by the gamma and epsilon chains, while a peripheral stalk is formed by the delta and b chains.

The protein resides in the cell inner membrane. Its function is as follows. F(1)F(0) ATP synthase produces ATP from ADP in the presence of a proton or sodium gradient. F-type ATPases consist of two structural domains, F(1) containing the extramembraneous catalytic core and F(0) containing the membrane proton channel, linked together by a central stalk and a peripheral stalk. During catalysis, ATP synthesis in the catalytic domain of F(1) is coupled via a rotary mechanism of the central stalk subunits to proton translocation. This protein is part of the stalk that links CF(0) to CF(1). It either transmits conformational changes from CF(0) to CF(1) or is implicated in proton conduction. The sequence is that of ATP synthase subunit delta from Aeromonas hydrophila subsp. hydrophila (strain ATCC 7966 / DSM 30187 / BCRC 13018 / CCUG 14551 / JCM 1027 / KCTC 2358 / NCIMB 9240 / NCTC 8049).